The primary structure comprises 1372 residues: DNA-directed RNA polymerase subunit beta' (1372 aa).

Residues cysteine 69, cysteine 71, cysteine 84, and cysteine 87 each coordinate Zn(2+). Residues aspartate 460, aspartate 462, and aspartate 464 each contribute to the Mg(2+) site. Zn(2+) contacts are provided by cysteine 808, cysteine 882, cysteine 889, and cysteine 892.

Belongs to the RNA polymerase beta' chain family. In terms of assembly, the RNAP catalytic core consists of 2 alpha, 1 beta, 1 beta' and 1 omega subunit. When a sigma factor is associated with the core the holoenzyme is formed, which can initiate transcription. Requires Mg(2+) as cofactor. It depends on Zn(2+) as a cofactor.

It catalyses the reaction RNA(n) + a ribonucleoside 5'-triphosphate = RNA(n+1) + diphosphate. Functionally, DNA-dependent RNA polymerase catalyzes the transcription of DNA into RNA using the four ribonucleoside triphosphates as substrates. This chain is DNA-directed RNA polymerase subunit beta', found in Rickettsia typhi (strain ATCC VR-144 / Wilmington).